The primary structure comprises 75 residues: uncharacterized protein (75 aa).

This is an uncharacterized protein from Vaccinia virus (strain Copenhagen) (VACV).